The sequence spans 139 residues: Sec-independent protein translocase protein TatB (139 aa).

The chain crosses the membrane as a helical span at residues 1-21 (MFDIGFTELLLVGLVALMVLG). The disordered stretch occupies residues 69 to 139 (LDLEREMKQS…PLRSDRPSEP (71 aa)). A compositionally biased stretch (pro residues) spans 80–95 (MPPPASNPAATPPSPP).

Belongs to the TatB family. As to quaternary structure, the Tat system comprises two distinct complexes: a TatABC complex, containing multiple copies of TatA, TatB and TatC subunits, and a separate TatA complex, containing only TatA subunits. Substrates initially bind to the TatABC complex, which probably triggers association of the separate TatA complex to form the active translocon.

It is found in the cell inner membrane. Its function is as follows. Part of the twin-arginine translocation (Tat) system that transports large folded proteins containing a characteristic twin-arginine motif in their signal peptide across membranes. Together with TatC, TatB is part of a receptor directly interacting with Tat signal peptides. TatB may form an oligomeric binding site that transiently accommodates folded Tat precursor proteins before their translocation. This chain is Sec-independent protein translocase protein TatB, found in Stutzerimonas stutzeri (strain A1501) (Pseudomonas stutzeri).